The chain runs to 129 residues: Replication initiation control protein YabA (129 aa).

Zn(2+) contacts are provided by His-103, Cys-105, Cys-119, and Cys-122.

This sequence belongs to the YabA family. As to quaternary structure, homotetramer. Interacts with both DnaA and DnaN, acting as a bridge between these two proteins. Zn(2+) is required as a cofactor.

The protein resides in the cytoplasm. Its subcellular location is the nucleoid. Its function is as follows. Involved in control of chromosome replication initiation. Inhibits the cooperative binding of DnaA to the oriC region, thus negatively regulating initiation of chromosome replication. Inhibits the ability of DnaA-ATP to form a helix on DNA; does not disassemble preformed DnaA-DNA helices. Decreases the residence time of DnaA on the chromosome at its binding sites (oriC, replication forks and promoter-binding sites). Tethers DnaA to the replication machinery via the DNA polymerase beta sliding clamp subunit (dnaN). Associates with oriC and other DnaA targets on the chromosome in a DnaA-dependent manner. In Listeria welshimeri serovar 6b (strain ATCC 35897 / DSM 20650 / CCUG 15529 / CIP 8149 / NCTC 11857 / SLCC 5334 / V8), this protein is Replication initiation control protein YabA.